Reading from the N-terminus, the 471-residue chain is Fructokinase-like 1, chloroplastic (471 aa).

Residues 1–38 (MASLLIFPHLHHFDSSLDRREVLVVRHSQASRRFLTPK) constitute a chloroplast transit peptide. Positions 36-85 (TPKASINGSGITNGAAAETTSKPSRKGRKKKQTSTVIEKDNTETDPELNP) are disordered. The segment covering 39 to 57 (ASINGSGITNGAAAETTSK) has biased composition (polar residues). The segment covering 58–67 (PSRKGRKKKQ) has biased composition (basic residues).

Belongs to the carbohydrate kinase PfkB family. In terms of assembly, interacts with CITRX/TRXz. Interacts with PTAC7. Self-interacts. Binds to FLN2. Associates with the plastid-encoded RNA polymerase (PEP) complex.

It localises to the plastid. It is found in the chloroplast. Functionally, required for proper chloroplast development, most likely through regulating plastid-encoded polymerase (PEP) dependent chloroplast transcription. Acts as a component of the transcriptionally active plastid chromosome that is required for plastid gene expression. This Arabidopsis thaliana (Mouse-ear cress) protein is Fructokinase-like 1, chloroplastic.